Consider the following 204-residue polypeptide: Holliday junction branch migration complex subunit RuvA (204 aa).

The interval Met1–Met64 is domain I. The domain II stretch occupies residues Thr65–Ala143. The segment at Leu144–Gly151 is flexible linker. Residues Val152–Arg204 are domain III.

This sequence belongs to the RuvA family. Homotetramer. Forms an RuvA(8)-RuvB(12)-Holliday junction (HJ) complex. HJ DNA is sandwiched between 2 RuvA tetramers; dsDNA enters through RuvA and exits via RuvB. An RuvB hexamer assembles on each DNA strand where it exits the tetramer. Each RuvB hexamer is contacted by two RuvA subunits (via domain III) on 2 adjacent RuvB subunits; this complex drives branch migration. In the full resolvosome a probable DNA-RuvA(4)-RuvB(12)-RuvC(2) complex forms which resolves the HJ.

It is found in the cytoplasm. Functionally, the RuvA-RuvB-RuvC complex processes Holliday junction (HJ) DNA during genetic recombination and DNA repair, while the RuvA-RuvB complex plays an important role in the rescue of blocked DNA replication forks via replication fork reversal (RFR). RuvA specifically binds to HJ cruciform DNA, conferring on it an open structure. The RuvB hexamer acts as an ATP-dependent pump, pulling dsDNA into and through the RuvAB complex. HJ branch migration allows RuvC to scan DNA until it finds its consensus sequence, where it cleaves and resolves the cruciform DNA. In Rhizobium etli (strain ATCC 51251 / DSM 11541 / JCM 21823 / NBRC 15573 / CFN 42), this protein is Holliday junction branch migration complex subunit RuvA.